Here is a 69-residue protein sequence, read N- to C-terminus: Large ribosomal subunit protein bL31 (69 aa).

Positions 17, 19, 37, and 40 each coordinate Zn(2+).

This sequence belongs to the bacterial ribosomal protein bL31 family. Type A subfamily. In terms of assembly, part of the 50S ribosomal subunit. Zn(2+) is required as a cofactor.

Binds the 23S rRNA. This Caldanaerobacter subterraneus subsp. tengcongensis (strain DSM 15242 / JCM 11007 / NBRC 100824 / MB4) (Thermoanaerobacter tengcongensis) protein is Large ribosomal subunit protein bL31.